Consider the following 197-residue polypeptide: MKTIAENWPPVRGDYVTGKPDSRIAVVTLASHLEAFPNAAIWGSSKTENLGVEKIIVNVISNSNIRYVLVCGTESRGHLAGHSLLAIHANGIDEKGRIVGSQGAIPFIENISREAVDRFQRQVTLLDRIGLNDPEEIRKIVEDYRDKGEVYPEEPVVVCAPKKRQASFAVPSSGDVIISEELVMDSMAGIICLAESL.

This sequence belongs to the MtrA family. As to quaternary structure, may be part of a complex composed of 3 subunits; MtxA, MtxH and MtxX.

This chain is Putative methyltransferase Mtx subunit A (mtxA), found in Methanosarcina acetivorans (strain ATCC 35395 / DSM 2834 / JCM 12185 / C2A).